The sequence spans 354 residues: Long form salivary protein D7L3 (354 aa).

Positions 1–26 (MQLTPRSVHLVHLLLAATTLISPSWS) are cleaved as a signal peptide.

This sequence belongs to the PBP/GOBP family.

The protein resides in the secreted. Modulates blood feeding of female mosquitoes on vertebrate species by binding and sequestering different mediators involved in the host response. Binds serotonin with high affinity. Binds weakly noradrenaline and histamine. Does not bind tryptamine, octopamine, dopamine, adrenaline, leukotriene C4, leukotriene D4, leukotriene B4, ADP and U-46619, a stable analog of thromboxane A2. Inhibits agonist-induced platelet aggregation. Exhibits vasodilating activity. This chain is Long form salivary protein D7L3, found in Anopheles gambiae (African malaria mosquito).